A 480-amino-acid polypeptide reads, in one-letter code: Docking protein 1 (480 aa).

M1 is modified (N-acetylmethionine). A PH domain is found at 3-119 (GALMEGPLFL…WVQILCRTAF (117 aa)). S48 is subject to Phosphoserine. An IRS-type PTB domain is found at 151–259 (EGSQFWVTSQ…QQQKAQGKVG (109 aa)). Positions 253–262 (KAQGKVGQGQ) are enriched in low complexity. The segment at 253 to 328 (KAQGKVGQGQ…GSTPAGAGEG (76 aa)) is disordered. The segment covering 265–276 (TRTDSHDGETEG) has biased composition (basic and acidic residues). 2 positions are modified to phosphoserine: S269 and S290. A phosphotyrosine mark is found at Y295, Y336, and Y340. Y361 bears the Phosphotyrosine; by INSR mark. At Y376 the chain carries Phosphotyrosine. Y397 is modified (phosphotyrosine; by INSR). Residues 398 to 480 (ELPYNPATDD…RVGVKSEGST (83 aa)) form a disordered region. Position 408 is a phosphotyrosine (Y408). Positions 410–423 (VPPPRSSKPTPAPK) are enriched in pro residues. Position 415 is a phosphoserine (S415). The span at 432 to 445 (SGTTAGSGSKGSDT) shows a compositional bias: low complexity. The span at 446–455 (ALYSQVQKSG) shows a compositional bias: polar residues. At Y448 the chain carries Phosphotyrosine.

The protein belongs to the DOK family. Type A subfamily. In terms of assembly, interacts with RasGAP and INPP5D/SHIP1. Interacts directly with phosphorylated ITGB3. Interacts with SRMS (via the SH2 and SH3 domains). In terms of processing, constitutively tyrosine-phosphorylated. Phosphorylated by TEC. Phosphorylated by LYN. Phosphorylated on tyrosine residues by the insulin receptor kinase. Results in the negative regulation of the insulin signaling pathway. Phosphorylated on tyrosine residues by SRMS.

It localises to the cytoplasm. It is found in the nucleus. Its function is as follows. DOK proteins are enzymatically inert adaptor or scaffolding proteins. They provide a docking platform for the assembly of multimolecular signaling complexes. DOK1 appears to be a negative regulator of the insulin signaling pathway. Modulates integrin activation by competing with talin for the same binding site on ITGB3. The chain is Docking protein 1 (Dok1) from Rattus norvegicus (Rat).